The chain runs to 366 residues: Class I histocompatibility antigen, Gogo-C*0201 alpha chain (366 aa).

A signal peptide spans 1 to 24 (MRVMAPRTLILPLSGALALTETWA). Positions 25–114 (GSHSMRYFYT…LRGYYNQSED (90 aa)) are alpha-1. The Extracellular portion of the chain corresponds to 25–308 (GSHSMRYFYT…EPSSQPTIPI (284 aa)). N110 carries an N-linked (GlcNAc...) asparagine glycan. Positions 115–206 (GSHTLQSMYG…ENGKETLQRA (92 aa)) are alpha-2. 2 disulfide bridges follow: C125–C188 and C227–C283. The segment at 207-298 (EPPKTHVTHH…GLPEPLTLRW (92 aa)) is alpha-3. The region spanning 209–297 (PKTHVTHHPL…EGLPEPLTLR (89 aa)) is the Ig-like C1-type domain. The connecting peptide stretch occupies residues 299–308 (EPSSQPTIPI). A helical membrane pass occupies residues 309–333 (VGIVVGLAVLVVLAVLGAVVTAMMC). Residues 334–366 (RRKSSGGKGGSCSQAACSNSAQGSDESLITCKA) lie on the Cytoplasmic side of the membrane.

It belongs to the MHC class I family. As to quaternary structure, heterodimer of an alpha chain and a beta chain (beta-2-microglobulin).

The protein localises to the membrane. Functionally, involved in the presentation of foreign antigens to the immune system. In Gorilla gorilla gorilla (Western lowland gorilla), this protein is Class I histocompatibility antigen, Gogo-C*0201 alpha chain.